The chain runs to 192 residues: Holliday junction branch migration complex subunit RuvA (192 aa).

Residues 1–64 form a domain I region; that stretch reads MLGRLTGLLA…EDAQVLFGFL (64 aa). Positions 65-139 are domain II; sequence TAPERETFRM…GKLGADLGPA (75 aa). The interval 139 to 143 is flexible linker; it reads AIGGK. Residues 144-192 are domain III; it reads PASDAQADILQALIALGYSEREAQAAVKALPAEVGVSDGIKLALKALAR.

It belongs to the RuvA family. Homotetramer. Forms an RuvA(8)-RuvB(12)-Holliday junction (HJ) complex. HJ DNA is sandwiched between 2 RuvA tetramers; dsDNA enters through RuvA and exits via RuvB. An RuvB hexamer assembles on each DNA strand where it exits the tetramer. Each RuvB hexamer is contacted by two RuvA subunits (via domain III) on 2 adjacent RuvB subunits; this complex drives branch migration. In the full resolvosome a probable DNA-RuvA(4)-RuvB(12)-RuvC(2) complex forms which resolves the HJ.

The protein resides in the cytoplasm. Its function is as follows. The RuvA-RuvB-RuvC complex processes Holliday junction (HJ) DNA during genetic recombination and DNA repair, while the RuvA-RuvB complex plays an important role in the rescue of blocked DNA replication forks via replication fork reversal (RFR). RuvA specifically binds to HJ cruciform DNA, conferring on it an open structure. The RuvB hexamer acts as an ATP-dependent pump, pulling dsDNA into and through the RuvAB complex. HJ branch migration allows RuvC to scan DNA until it finds its consensus sequence, where it cleaves and resolves the cruciform DNA. The sequence is that of Holliday junction branch migration complex subunit RuvA from Methylibium petroleiphilum (strain ATCC BAA-1232 / LMG 22953 / PM1).